We begin with the raw amino-acid sequence, 432 residues long: UPF0597 protein APL_1605 (432 aa).

Belongs to the UPF0597 family.

The protein is UPF0597 protein APL_1605 of Actinobacillus pleuropneumoniae serotype 5b (strain L20).